The chain runs to 307 residues: Protoheme IX farnesyltransferase (307 aa).

Transmembrane regions (helical) follow at residues 24–44 (ISLL…VGLV), 52–72 (PVIA…AGAL), 115–135 (VVLG…TIFF), 152–172 (IVIG…AASG), 179–199 (VILV…LSLY), 224–244 (QILL…MLGE), 245–265 (AGLA…LLAV), and 284–304 (FGFS…EALV).

This sequence belongs to the UbiA prenyltransferase family. Protoheme IX farnesyltransferase subfamily.

Its subcellular location is the cell inner membrane. The enzyme catalyses heme b + (2E,6E)-farnesyl diphosphate + H2O = Fe(II)-heme o + diphosphate. It functions in the pathway porphyrin-containing compound metabolism; heme O biosynthesis; heme O from protoheme: step 1/1. Converts heme B (protoheme IX) to heme O by substitution of the vinyl group on carbon 2 of heme B porphyrin ring with a hydroxyethyl farnesyl side group. In Azorhizobium caulinodans (strain ATCC 43989 / DSM 5975 / JCM 20966 / LMG 6465 / NBRC 14845 / NCIMB 13405 / ORS 571), this protein is Protoheme IX farnesyltransferase.